Consider the following 65-residue polypeptide: Large ribosomal subunit protein uL29 (65 aa).

It belongs to the universal ribosomal protein uL29 family.

In Acidithiobacillus ferrooxidans (strain ATCC 23270 / DSM 14882 / CIP 104768 / NCIMB 8455) (Ferrobacillus ferrooxidans (strain ATCC 23270)), this protein is Large ribosomal subunit protein uL29.